A 428-amino-acid chain; its full sequence is Histidinol dehydrogenase (428 aa).

Positions 126, 188, and 211 each coordinate NAD(+). Substrate is bound by residues serine 234, glutamine 256, and histidine 259. Zn(2+) contacts are provided by glutamine 256 and histidine 259. Active-site proton acceptor residues include glutamate 324 and histidine 325. The substrate site is built by histidine 325, aspartate 358, glutamate 412, and histidine 417. Aspartate 358 contacts Zn(2+). Histidine 417 contacts Zn(2+).

Belongs to the histidinol dehydrogenase family. It depends on Zn(2+) as a cofactor.

The enzyme catalyses L-histidinol + 2 NAD(+) + H2O = L-histidine + 2 NADH + 3 H(+). It participates in amino-acid biosynthesis; L-histidine biosynthesis; L-histidine from 5-phospho-alpha-D-ribose 1-diphosphate: step 9/9. In terms of biological role, catalyzes the sequential NAD-dependent oxidations of L-histidinol to L-histidinaldehyde and then to L-histidine. The sequence is that of Histidinol dehydrogenase from Chlorobium chlorochromatii (strain CaD3).